The sequence spans 957 residues: Exoribonuclease II, mitochondrial (957 aa).

Residues 1 to 54 constitute a mitochondrion transit peptide; the sequence is MNYRQLFLLQNVNLESNYLLKRVCLSLKLSPCKLTRKFHHACPSSSKVLKYFRI. The RNB domain occupies 503–843; sequence RVDLRHLKAF…FTHHQIQSVL (341 aa).

It belongs to the RNR ribonuclease family.

The protein localises to the mitochondrion. The catalysed reaction is Exonucleolytic cleavage in the 3'- to 5'-direction to yield nucleoside 5'-phosphates.. Required for intron-independent turnover and processing of mitochondrial RNA. Participates in 3'-mtRNA processing where it hydrolyzes single-stranded RNA or partially double-stranded RNA with 3'-single-stranded tails. This Schizosaccharomyces pombe (strain 972 / ATCC 24843) (Fission yeast) protein is Exoribonuclease II, mitochondrial (rpm1).